The sequence spans 229 residues: 2,3-bisphosphoglycerate-dependent phosphoglycerate mutase (229 aa).

Substrate-binding positions include 7 to 14 (RHGQSEWN), 20 to 21 (TG), R59, 86 to 89 (ERHY), K97, 113 to 114 (RR), and 182 to 183 (GN). The Tele-phosphohistidine intermediate role is filled by H8. E86 (proton donor/acceptor) is an active-site residue.

Belongs to the phosphoglycerate mutase family. BPG-dependent PGAM subfamily.

The catalysed reaction is (2R)-2-phosphoglycerate = (2R)-3-phosphoglycerate. Its pathway is carbohydrate degradation; glycolysis; pyruvate from D-glyceraldehyde 3-phosphate: step 3/5. Catalyzes the interconversion of 2-phosphoglycerate and 3-phosphoglycerate. In Listeria monocytogenes serovar 1/2a (strain ATCC BAA-679 / EGD-e), this protein is 2,3-bisphosphoglycerate-dependent phosphoglycerate mutase.